The sequence spans 395 residues: Flagellin B (395 aa).

It belongs to the bacterial flagellin family.

Its subcellular location is the secreted. The protein localises to the bacterial flagellum. Functionally, flagellin is the subunit protein which polymerizes to form the filaments of bacterial flagella. The chain is Flagellin B (flaB) from Rhizobium meliloti (Ensifer meliloti).